We begin with the raw amino-acid sequence, 21 residues long: Dahlein-5.2 (21 aa).

Expressed by the skin dorsal glands.

It is found in the secreted. Functionally, has no antimicrobial activity. Strongly inhibits the formation of NO by neuronal nitric oxide synthase at micromolar concentrations. The protein is Dahlein-5.2 of Ranoidea dahlii (Dahl's aquatic frog).